Consider the following 389-residue polypeptide: Shewanella-like protein phosphatase 1 (389 aa).

Residues 1–53 (MASLYLNSLLPLPPSHPQKLLEPSSSSLLSTSNGNELALKPIVINGDPPTFVS) constitute a chloroplast transit peptide. 4 residues coordinate Mn(2+): D64, H66, D102, and N137. H138 serves as the catalytic Proton donor. Mn(2+)-binding residues include H242 and H314.

This sequence belongs to the metallophosphoesterase superfamily. SLP family. Mn(2+) is required as a cofactor. In terms of tissue distribution, expressed in rosettes leaves, shoots and flowers (at protein level).

It localises to the plastid. Its subcellular location is the chloroplast. Shows phosphatase activity, hydrolyzing the artificial substrate para-nitrophenylphosphate (pNPP) in vitro. This Arabidopsis thaliana (Mouse-ear cress) protein is Shewanella-like protein phosphatase 1.